Consider the following 362-residue polypeptide: Ribosome-binding ATPase YchF (362 aa).

Residues 3–255 (FKCGIIGLPN…MSDEEKKSFM (253 aa)) form the OBG-type G domain. Residue 12-17 (NVGKST) coordinates ATP. 2 residues coordinate Mg(2+): Ser16 and Thr36. Residues 277–360 (NLITFFTVGD…QDGDIIHFLF (84 aa)) form the TGS domain.

It belongs to the TRAFAC class OBG-HflX-like GTPase superfamily. OBG GTPase family. YchF/OLA1 subfamily. It depends on Mg(2+) as a cofactor.

Its function is as follows. ATPase that binds to both the 70S ribosome and the 50S ribosomal subunit in a nucleotide-independent manner. This chain is Ribosome-binding ATPase YchF, found in Buchnera aphidicola subsp. Acyrthosiphon pisum (strain APS) (Acyrthosiphon pisum symbiotic bacterium).